Reading from the N-terminus, the 274-residue chain is MDKYAVFGNPIKHSKSPAIHKQFAISLGEQIDYRAILAPIDNFEKTVSNFFAQGGKGANVTMPFKEQAFAMADELTPLAKIVGAVNTLKKQADGTLLGDNTDGIGFVSDLLANNVSITGKRILIIGAGGAARGVVLPLLDHQPQEVVIVNRTAEKAQNLAKLFAQHGNVSGYGFNNLPENDYALIINSTSSSMNDELPALDQKHITNCEVAYDMFYSLQNTIFMNWVAQYNSKTKLLDGSGMLVGQAAQAYYVWRNKMPAILPVVNALKQGALT.

Shikimate is bound by residues 14–16 (SKS) and Thr61. The active-site Proton acceptor is the Lys65. Residues Asn86 and Asp102 each coordinate shikimate. Residues 126-130 (GAGGA), 150-155 (NRTAEK), and Met214 contribute to the NADP(+) site. Tyr216 is a binding site for shikimate. Gly239 serves as a coordination point for NADP(+).

It belongs to the shikimate dehydrogenase family. Homodimer.

The catalysed reaction is shikimate + NADP(+) = 3-dehydroshikimate + NADPH + H(+). Its pathway is metabolic intermediate biosynthesis; chorismate biosynthesis; chorismate from D-erythrose 4-phosphate and phosphoenolpyruvate: step 4/7. Involved in the biosynthesis of the chorismate, which leads to the biosynthesis of aromatic amino acids. Catalyzes the reversible NADPH linked reduction of 3-dehydroshikimate (DHSA) to yield shikimate (SA). The polypeptide is Shikimate dehydrogenase (NADP(+)) (Pseudoalteromonas translucida (strain TAC 125)).